Consider the following 426-residue polypeptide: DNA polymerase processivity factor component A20 (426 aa).

This sequence belongs to the poxviruses A20 family. In terms of assembly, interacts with the DNA polymerase catalytic subunit E9. Interacts with UDG. Component of the Uracil-DNA glycosylase(UDG)-A20-polymerase complex; A20 and UDG form a heterodimeric processivity factor that associates with E9 to form the processive polymerase holoenzyme. Interacts with D5.

Functionally, plays an essential role in viral DNA replication by acting as the polymerase processivity factor together with protein D4. May serve as a bridge which links the DNA polymerase E9 and the uracil DNA glycosylase. The protein is DNA polymerase processivity factor component A20 of Vaccinia virus (strain Ankara) (VACV).